The following is a 698-amino-acid chain: Gametogenetin-binding protein 2 (698 aa).

A disordered region spans residues 555-575 (CMADPGNRETSGNTTHTEFHR).

It localises to the cytoplasm. Its function is as follows. May be involved in spermatogenesis. This chain is Gametogenetin-binding protein 2 (GGNBP2), found in Gallus gallus (Chicken).